The following is a 376-amino-acid chain: Chaperone protein DnaJ (376 aa).

In terms of domain architecture, J spans 5 to 72; the sequence is DFYEVLGVPK…QKRAAYDQYG (68 aa). Residues 136–214 form a CR-type zinc finger; the sequence is GKEAQIRIPS…CHGQGRVKKQ (79 aa). 8 residues coordinate Zn(2+): Cys149, Cys152, Cys166, Cys169, Cys188, Cys191, Cys202, and Cys205. 4 CXXCXGXG motif repeats span residues 149–156, 166–173, 188–195, and 202–209; these read CETCHGSG, CGTCQGSG, CPHCRGTG, and CTACHGQG. Disordered regions lie at residues 227 to 246 and 352 to 376; these read DGMR…GGPP and SLKK…SFFS. The segment covering 237 to 246 has biased composition (gly residues); the sequence is GEPGTNGGPP. The span at 367–376 shows a compositional bias: basic and acidic residues; sequence WTDRLKSFFS.

Belongs to the DnaJ family. In terms of assembly, homodimer. The cofactor is Zn(2+).

It is found in the cytoplasm. Its function is as follows. Participates actively in the response to hyperosmotic and heat shock by preventing the aggregation of stress-denatured proteins and by disaggregating proteins, also in an autonomous, DnaK-independent fashion. Unfolded proteins bind initially to DnaJ; upon interaction with the DnaJ-bound protein, DnaK hydrolyzes its bound ATP, resulting in the formation of a stable complex. GrpE releases ADP from DnaK; ATP binding to DnaK triggers the release of the substrate protein, thus completing the reaction cycle. Several rounds of ATP-dependent interactions between DnaJ, DnaK and GrpE are required for fully efficient folding. Also involved, together with DnaK and GrpE, in the DNA replication of plasmids through activation of initiation proteins. The polypeptide is Chaperone protein DnaJ (Acidovorax sp. (strain JS42)).